The chain runs to 474 residues: tRNA-2-methylthio-N(6)-dimethylallyladenosine synthase (474 aa).

The 118-residue stretch at 3–120 (KKLHIKTWGC…LPEMLNHVQG (118 aa)) folds into the MTTase N-terminal domain. Cys12, Cys49, Cys83, Cys157, Cys161, and Cys164 together coordinate [4Fe-4S] cluster. Residues 143–375 (RAEGPTAFVS…QDRINQQVLQ (233 aa)) enclose the Radical SAM core domain. The TRAM domain occupies 378 to 441 (RRMLGTVQRI…TNSLRGTVVR (64 aa)).

Belongs to the methylthiotransferase family. MiaB subfamily. As to quaternary structure, monomer. [4Fe-4S] cluster serves as cofactor.

Its subcellular location is the cytoplasm. The catalysed reaction is N(6)-dimethylallyladenosine(37) in tRNA + (sulfur carrier)-SH + AH2 + 2 S-adenosyl-L-methionine = 2-methylsulfanyl-N(6)-dimethylallyladenosine(37) in tRNA + (sulfur carrier)-H + 5'-deoxyadenosine + L-methionine + A + S-adenosyl-L-homocysteine + 2 H(+). Functionally, catalyzes the methylthiolation of N6-(dimethylallyl)adenosine (i(6)A), leading to the formation of 2-methylthio-N6-(dimethylallyl)adenosine (ms(2)i(6)A) at position 37 in tRNAs that read codons beginning with uridine. This chain is tRNA-2-methylthio-N(6)-dimethylallyladenosine synthase, found in Serratia proteamaculans (strain 568).